Consider the following 368-residue polypeptide: 3-isopropylmalate dehydrogenase (368 aa).

79–91 contacts NAD(+); sequence GPEWGTSSTVRPE. Positions 98, 108, 137, and 226 each coordinate substrate. Residues D226, D251, and D255 each coordinate Mg(2+). 291-303 is a binding site for NAD(+); sequence GSAPDISGKGIVN.

This sequence belongs to the isocitrate and isopropylmalate dehydrogenases family. In terms of assembly, homodimer. Mg(2+) serves as cofactor. The cofactor is Mn(2+).

It is found in the cytoplasm. It carries out the reaction (2R,3S)-3-isopropylmalate + NAD(+) = 4-methyl-2-oxopentanoate + CO2 + NADH. The protein operates within amino-acid biosynthesis; L-leucine biosynthesis; L-leucine from 3-methyl-2-oxobutanoate: step 3/4. Catalyzes the oxidation of 3-carboxy-2-hydroxy-4-methylpentanoate (3-isopropylmalate) to 3-carboxy-4-methyl-2-oxopentanoate. The product decarboxylates to 4-methyl-2 oxopentanoate. The protein is 3-isopropylmalate dehydrogenase (LEU1) of Sordaria macrospora.